The sequence spans 199 residues: Venom allergen 5 (199 aa).

Disulfide bonds link Cys-21-Cys-87 and Cys-167-Cys-184. One can recognise an SCP domain in the interval 38 to 186; the sequence is LKVHNDERQK…FYKCYLACNY (149 aa). The segment at 47–67 is disordered; sequence KVKAGQETRGNPGPQPAASNM.

It belongs to the CRISP family. Venom allergen 5-like subfamily. As to expression, expressed by the venom gland.

It is found in the secreted. The sequence is that of Venom allergen 5 from Brachyponera chinensis (Asian needle ant).